Here is a 573-residue protein sequence, read N- to C-terminus: Potassium-transporting ATPase potassium-binding subunit (573 aa).

Transmembrane regions (helical) follow at residues Ile6–Ile26, Phe66–Leu86, Ala135–Ile155, Ile177–Val197, Ile257–Val277, Gly283–Ile303, Ile382–Phe402, Met428–Ile448, Ile493–Leu513, and Phe537–Pro557.

The protein belongs to the KdpA family. The system is composed of three essential subunits: KdpA, KdpB and KdpC.

It is found in the cell inner membrane. Its function is as follows. Part of the high-affinity ATP-driven potassium transport (or Kdp) system, which catalyzes the hydrolysis of ATP coupled with the electrogenic transport of potassium into the cytoplasm. This subunit binds the periplasmic potassium ions and delivers the ions to the membrane domain of KdpB through an intramembrane tunnel. This is Potassium-transporting ATPase potassium-binding subunit from Francisella tularensis subsp. novicida (strain U112).